The following is a 1140-amino-acid chain: Condensin-2 complex subunit G2 (1140 aa).

The HEAT repeat unit spans residues 460 to 493 (LLPALKSSLHDSSEKVRVAFVGMLLKIKAARAAK).

Component of the condensin-2 complex, which contains the smc2 and smc4 heterodimer, and three non SMC subunits that probably regulate the complex: ncaph2, ncapd3 and ncapg2.

The protein resides in the nucleus. Functionally, regulatory subunit of the condensin-2 complex, a complex which establishes mitotic chromosome architecture and is involved in physical rigidity of the chromatid axis. Plays a role in the embryonic development of the head and kidney structures. The chain is Condensin-2 complex subunit G2 from Danio rerio (Zebrafish).